The chain runs to 366 residues: tRNA/tmRNA (uracil-C(5))-methyltransferase (366 aa).

Residues glutamine 190, tyrosine 218, asparagine 223, glutamate 239, and aspartate 299 each coordinate S-adenosyl-L-methionine. The active-site Nucleophile is cysteine 324. Glutamate 358 acts as the Proton acceptor in catalysis.

It belongs to the class I-like SAM-binding methyltransferase superfamily. RNA M5U methyltransferase family. TrmA subfamily.

It carries out the reaction uridine(54) in tRNA + S-adenosyl-L-methionine = 5-methyluridine(54) in tRNA + S-adenosyl-L-homocysteine + H(+). The enzyme catalyses uridine(341) in tmRNA + S-adenosyl-L-methionine = 5-methyluridine(341) in tmRNA + S-adenosyl-L-homocysteine + H(+). Dual-specificity methyltransferase that catalyzes the formation of 5-methyluridine at position 54 (m5U54) in all tRNAs, and that of position 341 (m5U341) in tmRNA (transfer-mRNA). The protein is tRNA/tmRNA (uracil-C(5))-methyltransferase of Shigella dysenteriae serotype 1 (strain Sd197).